A 1231-amino-acid polypeptide reads, in one-letter code: Pesticidal crystal protein Cry1Bd (1231 aa).

Belongs to the delta endotoxin family.

In terms of biological role, promotes colloidosmotic lysis by binding to the midgut epithelial cells of lepidopteran larvae. Toxic to Plutella xylostella. The chain is Pesticidal crystal protein Cry1Bd (cry1Bd) from Bacillus thuringiensis subsp. wuhanensis.